Consider the following 343-residue polypeptide: Calcium/calmodulin-dependent protein kinase type 1B (343 aa).

Positions 15 to 270 constitute a Protein kinase domain; sequence YEIREKLGSG…CQQALQHLWI (256 aa). ATP is bound by residues 21-29 and lysine 44; that span reads LGSGAFSEV. Aspartate 136 acts as the Proton acceptor in catalysis. The calmodulin-binding stretch occupies residues 290-311; sequence KNFARTHWKRAFNATSFLRHIR. Positions 314–343 are disordered; that stretch reads GQSPEGEEASRQGMTRHSHPGLGTSQSPKW. A Phosphoserine modification is found at serine 338.

This sequence belongs to the protein kinase superfamily. CAMK Ser/Thr protein kinase family. CaMK subfamily. Isoform 1 and isoform 2 are phosphorylated by CAMKK1. In terms of tissue distribution, isoform 1 is expressed in liver, heart, lung, kidney, spleen and testis. Isoform 2 is predominantly expressed in cerebrum and cerebellum.

The protein localises to the cytoplasm. It is found in the nucleus. It catalyses the reaction L-seryl-[protein] + ATP = O-phospho-L-seryl-[protein] + ADP + H(+). The catalysed reaction is L-threonyl-[protein] + ATP = O-phospho-L-threonyl-[protein] + ADP + H(+). Its activity is regulated as follows. Activated by Ca(2+)/calmodulin. Must be phosphorylated to be maximally active. Activated by CAMKK1. Functionally, calcium/calmodulin-dependent protein kinase belonging to a proposed calcium-triggered signaling cascade. In vitro, isoform 1 and isoform 2 phosphorylate CREB1, SYN1/synapsin I. Phosphorylates and activates CAMK1. This is Calcium/calmodulin-dependent protein kinase type 1B (Pnck) from Rattus norvegicus (Rat).